The sequence spans 256 residues: Lysosomal membrane ascorbate-dependent ferrireductase CYB561A3 (256 aa).

The Cytoplasmic portion of the chain corresponds to 1–3 (MAS). Residues 4–24 (GWFYMSCMVLGSLGSMCILFT) traverse the membrane as a helical segment. Residues 12–219 (VLGSLGSMCI…FGLLVLYILL (208 aa)) form the Cytochrome b561 domain. Over 25–40 (TYWMQYWRGGFAWDGT) the chain is Lumenal. The chain crosses the membrane as a helical span at residues 41-61 (VLMFNWHPVLMVSGMVVLYGA). Residues His47 and Arg67 each coordinate heme b. Residues 62-83 (ASLVYRLPASWVGPKLPWKVLH) lie on the Cytoplasmic side of the membrane. L-ascorbate is bound by residues Lys76 and Lys80. His83 is a heme b binding site. Residues 84 to 104 (AALHLLAFTVTVVGLTAVFGF) form a helical membrane-spanning segment. The Lumenal segment spans residues 105–119 (HNHSKITHLYSLHSW). The N-linked (GlcNAc...) asparagine glycan is linked to Asn106. Residues 112 to 115 (HLYS) and His117 each bind heme b. Residues 120-140 (LGITTVALFACQWFLGFAVFL) traverse the membrane as a helical segment. Residues 141–154 (LPWASQWLRSLLKP) are Cytoplasmic-facing. Arg149 serves as a coordination point for L-ascorbate. Residues 155–175 (VHVFFGACILSLSIASVISGI) traverse the membrane as a helical segment. 2 residues coordinate heme b: His156 and Glu177. Residues 176–202 (NEKLFFVLKNATRPYSSLPGEAVFANS) lie on the Lumenal side of the membrane. Residues 203-223 (TGILVVSFGLLVLYILLASSW) traverse the membrane as a helical segment. Arg224 contributes to the heme b binding site. Residues 224 to 256 (RRPDPGALTDRQVWLLVSHYRWDKAKKACFAPC) are Cytoplasmic-facing.

As to quaternary structure, homodimer. The cofactor is heme b. Post-translationally, N-glycosylated.

It is found in the late endosome membrane. The protein resides in the lysosome membrane. It catalyses the reaction Fe(3+)(out) + L-ascorbate(in) = monodehydro-L-ascorbate radical(in) + Fe(2+)(out) + H(+). Its function is as follows. Transmembrane reductase that uses ascorbate as an electron donor in the cytoplasm and transfers electrons across membranes to reduce iron cations Fe(3+) into Fe(2+) in the lumen of the late endosome and lysosome. Reduced iron can then be extruded from the late endosome and lysosome to the cytoplasm by divalent metal-specific transporters. It is therefore most probably involved in endosomal and lysosomal cellular iron homeostasis. The polypeptide is Lysosomal membrane ascorbate-dependent ferrireductase CYB561A3 (Rattus norvegicus (Rat)).